Here is a 304-residue protein sequence, read N- to C-terminus: Nod factor export ATP-binding protein I (304 aa).

Residues 6 to 236 (IDLAGVKKSF…HIGCQVIEIF (231 aa)) form the ABC transporter domain. 38-45 (GPNGAGKS) contributes to the ATP binding site.

The protein belongs to the ABC transporter superfamily. Lipooligosaccharide exporter (TC 3.A.1.102) family. The complex is composed of two ATP-binding proteins (NodI) and two transmembrane proteins (NodJ).

It is found in the cell inner membrane. Its function is as follows. Part of the ABC transporter complex NodIJ involved in the export of the nodulation factors (Nod factors), the bacterial signal molecules that induce symbiosis and subsequent nodulation induction. Nod factors are LCO (lipo-chitin oligosaccharide), a modified beta-1,4-linked N-acetylglucosamine oligosaccharide. This subunit is responsible for energy coupling to the transport system. The protein is Nod factor export ATP-binding protein I of Rhizobium sp. (strain N33).